Consider the following 268-residue polypeptide: Cyclohexadienyl dehydratase (268 aa).

Residues 1–25 form the signal peptide; it reads MPKSFRHLVQALACLALLASASLQA.

This sequence belongs to the bacterial solute-binding protein 3 family. Homodimer.

It is found in the periplasm. It catalyses the reaction prephenate + H(+) = 3-phenylpyruvate + CO2 + H2O. The enzyme catalyses L-arogenate + H(+) = L-phenylalanine + CO2 + H2O. It participates in amino-acid biosynthesis; L-phenylalanine biosynthesis; L-phenylalanine from L-arogenate: step 1/1. The protein operates within amino-acid biosynthesis; L-phenylalanine biosynthesis; phenylpyruvate from prephenate: step 1/1. In terms of biological role, forms alternative pathway for phenylalanine biosynthesis. Can catalyze two reactions: prephenate dehydratase and arogenate dehydratase. May have a role in chemotaxis or transport. This Pseudomonas aeruginosa (strain ATCC 15692 / DSM 22644 / CIP 104116 / JCM 14847 / LMG 12228 / 1C / PRS 101 / PAO1) protein is Cyclohexadienyl dehydratase (pheC).